Here is an 85-residue protein sequence, read N- to C-terminus: Sec-independent protein translocase protein TatA (85 aa).

The helical transmembrane segment at 1 to 21 threads the bilayer; the sequence is MGGISIWQLLIIALIVVLLFG. Residues 43 to 85 form a disordered region; the sequence is MSSEEDKKALEDAEAAKPVQTAQTAQPTQQATEKKPESNKEQA. The span at 46–57 shows a compositional bias: basic and acidic residues; that stretch reads EEDKKALEDAEA. A compositionally biased stretch (low complexity) spans 58 to 73; the sequence is AKPVQTAQTAQPTQQA. The segment covering 74 to 85 has biased composition (basic and acidic residues); it reads TEKKPESNKEQA.

It belongs to the TatA/E family. The Tat system comprises two distinct complexes: a TatABC complex, containing multiple copies of TatA, TatB and TatC subunits, and a separate TatA complex, containing only TatA subunits. Substrates initially bind to the TatABC complex, which probably triggers association of the separate TatA complex to form the active translocon.

Its subcellular location is the cell inner membrane. Its function is as follows. Part of the twin-arginine translocation (Tat) system that transports large folded proteins containing a characteristic twin-arginine motif in their signal peptide across membranes. TatA could form the protein-conducting channel of the Tat system. This chain is Sec-independent protein translocase protein TatA, found in Shewanella sp. (strain MR-4).